We begin with the raw amino-acid sequence, 177 residues long: 2-C-methyl-D-erythritol 2,4-cyclodiphosphate synthase (177 aa).

Residues Asp-23 and His-25 each coordinate a divalent metal cation. Residues 23–25 and 49–50 each bind 4-CDP-2-C-methyl-D-erythritol 2-phosphate; these read DVH and HS. His-57 serves as a coordination point for a divalent metal cation. 4-CDP-2-C-methyl-D-erythritol 2-phosphate-binding positions include 71–73, 76–80, 115–121, and Arg-157; these read DIG, FSDTD, and AQAPRMA.

The protein belongs to the IspF family. In terms of assembly, homotrimer. Requires a divalent metal cation as cofactor.

The enzyme catalyses 4-CDP-2-C-methyl-D-erythritol 2-phosphate = 2-C-methyl-D-erythritol 2,4-cyclic diphosphate + CMP. It participates in isoprenoid biosynthesis; isopentenyl diphosphate biosynthesis via DXP pathway; isopentenyl diphosphate from 1-deoxy-D-xylulose 5-phosphate: step 4/6. Its function is as follows. Involved in the biosynthesis of isopentenyl diphosphate (IPP) and dimethylallyl diphosphate (DMAPP), two major building blocks of isoprenoid compounds. Catalyzes the conversion of 4-diphosphocytidyl-2-C-methyl-D-erythritol 2-phosphate (CDP-ME2P) to 2-C-methyl-D-erythritol 2,4-cyclodiphosphate (ME-CPP) with a corresponding release of cytidine 5-monophosphate (CMP). This chain is 2-C-methyl-D-erythritol 2,4-cyclodiphosphate synthase, found in Nitrosospira multiformis (strain ATCC 25196 / NCIMB 11849 / C 71).